Here is a 416-residue protein sequence, read N- to C-terminus: Argininosuccinate synthase (416 aa).

ATP-binding positions include A19–S27 and A46. L-citrulline-binding residues include Y97 and S102. G127 serves as a coordination point for ATP. L-aspartate-binding residues include T129, N133, and D134. N133 is an L-citrulline binding site. Residues R137, S188, S197, E273, and Y285 each contribute to the L-citrulline site.

Belongs to the argininosuccinate synthase family. Type 1 subfamily. Homotetramer.

The protein resides in the cytoplasm. The catalysed reaction is L-citrulline + L-aspartate + ATP = 2-(N(omega)-L-arginino)succinate + AMP + diphosphate + H(+). It participates in amino-acid biosynthesis; L-arginine biosynthesis; L-arginine from L-ornithine and carbamoyl phosphate: step 2/3. This Granulibacter bethesdensis (strain ATCC BAA-1260 / CGDNIH1) protein is Argininosuccinate synthase.